The following is a 60-amino-acid chain: Translational regulator CsrA (60 aa).

The protein belongs to the CsrA/RsmA family. Homodimer; the beta-strands of each monomer intercalate to form a hydrophobic core, while the alpha-helices form wings that extend away from the core.

It is found in the cytoplasm. Functionally, a key translational regulator that binds mRNA to regulate translation initiation and/or mRNA stability. Mediates global changes in gene expression, shifting from rapid growth to stress survival by linking envelope stress, the stringent response and the catabolite repression systems. Usually binds in the 5'-UTR; binding at or near the Shine-Dalgarno sequence prevents ribosome-binding, repressing translation, binding elsewhere in the 5'-UTR can activate translation and/or stabilize the mRNA. Its function is antagonized by small RNA(s). This Histophilus somni (strain 2336) (Haemophilus somnus) protein is Translational regulator CsrA.